We begin with the raw amino-acid sequence, 455 residues long: Epoxide hydrolase 1 (455 aa).

Residues 1–21 (MWLEILLTSVLGFAIYWFISR) form a helical; Signal-anchor for type III membrane protein membrane-spanning segment. Topologically, residues 22-455 (DKEETLPLED…RKFLSVLERQ (434 aa)) are cytoplasmic. Aspartate 226 acts as the Nucleophile in catalysis. Arginine 295 carries the dimethylated arginine modification. Tyrosine 374 (proton donor) is an active-site residue. Histidine 431 serves as the catalytic Proton acceptor.

It belongs to the peptidase S33 family. In terms of tissue distribution, found in liver.

Its subcellular location is the microsome membrane. It is found in the endoplasmic reticulum membrane. It carries out the reaction cis-stilbene oxide + H2O = (1R,2R)-hydrobenzoin. The catalysed reaction is 1-(4-methoxyphenyl)-N-methyl-N-[(3-methyloxetan-3-yl)methyl]methanamine + H2O = 2-{[(4-methoxybenzyl)(methyl)amino]methyl}-2-methylpropane-1,3-diol. The enzyme catalyses 8,9-epoxy-(5Z,11Z,14Z)-eicosatrienoate + H2O = 8,9-dihydroxy-(5Z,11Z,14Z)-eicosatrienoate. It catalyses the reaction 11,12-epoxy-(5Z,8Z,14Z)-eicosatrienoate + H2O = 11,12-dihydroxy-(5Z,8Z,14Z)-eicosatrienoate. It carries out the reaction 2-(5Z,8Z,11Z,14Z-eicosatetraenoyl)-glycerol + H2O = glycerol + (5Z,8Z,11Z,14Z)-eicosatetraenoate + H(+). With respect to regulation, inhibited by 10-hydroxystearamide and methoxy-arachidonyl fluorophosphate. Biotransformation enzyme that catalyzes the hydrolysis of arene and aliphatic epoxides to less reactive and more water soluble dihydrodiols by the trans addition of water. Plays a role in the metabolism of endogenous lipids such as epoxide-containing fatty acids. Metabolizes the abundant endocannabinoid 2-arachidonoylglycerol (2-AG) to free arachidonic acid (AA) and glycerol. Binds 20(S)-hydroxycholesterol (20(S)-OHC). In Homo sapiens (Human), this protein is Epoxide hydrolase 1.